Consider the following 274-residue polypeptide: Ribosomal RNA small subunit methyltransferase A (274 aa).

S-adenosyl-L-methionine is bound by residues H15, L17, G42, E64, D89, and N109.

The protein belongs to the class I-like SAM-binding methyltransferase superfamily. rRNA adenine N(6)-methyltransferase family. RsmA subfamily.

The protein resides in the cytoplasm. It catalyses the reaction adenosine(1518)/adenosine(1519) in 16S rRNA + 4 S-adenosyl-L-methionine = N(6)-dimethyladenosine(1518)/N(6)-dimethyladenosine(1519) in 16S rRNA + 4 S-adenosyl-L-homocysteine + 4 H(+). In terms of biological role, specifically dimethylates two adjacent adenosines (A1518 and A1519) in the loop of a conserved hairpin near the 3'-end of 16S rRNA in the 30S particle. May play a critical role in biogenesis of 30S subunits. The protein is Ribosomal RNA small subunit methyltransferase A of Synechococcus sp. (strain CC9902).